Here is a 263-residue protein sequence, read N- to C-terminus: Probable cyclic nucleotide phosphodiesterase CPS_4178 (263 aa).

7 residues coordinate Fe cation: D21, H23, D62, N94, H160, H198, and H200. AMP-binding positions include H23, D62, and 94-95 (NH). AMP is bound at residue H200.

This sequence belongs to the cyclic nucleotide phosphodiesterase class-III family. It depends on Fe(2+) as a cofactor.

The sequence is that of Probable cyclic nucleotide phosphodiesterase CPS_4178 from Colwellia psychrerythraea (strain 34H / ATCC BAA-681) (Vibrio psychroerythus).